A 634-amino-acid chain; its full sequence is Pescadillo homolog (634 aa).

The region spanning 321 to 414 (RLRTLFKGLK…QLLPTNKYFM (94 aa)) is the BRCT domain. Disordered stretches follow at residues 437-473 (EEKA…EEIE), 491-561 (EYKK…RKAE), and 603-634 (NIDA…LKMA). The residue at position 453 (Ser453) is a Phosphoserine. 2 stretches are compositionally biased toward acidic residues: residues 454 to 473 (DDDD…EEIE) and 501 to 527 (VNED…DVEQ). Coiled-coil stretches lie at residues 460 to 546 (SDAE…KVES) and 596 to 629 (LLRK…AAAK). Composition is skewed to basic and acidic residues over residues 528-548 (LDDK…ESGK) and 603-623 (NIDA…KKAA). The span at 624–634 (AEAAAKALKMA) shows a compositional bias: low complexity.

Belongs to the pescadillo family.

Its subcellular location is the nucleus. The protein localises to the nucleolus. It is found in the nucleoplasm. Functionally, required for maturation of ribosomal RNAs and formation of the large ribosomal subunit. This is Pescadillo homolog from Drosophila willistoni (Fruit fly).